The primary structure comprises 144 residues: 3-hydroxyacyl-[acyl-carrier-protein] dehydratase FabZ (144 aa).

His-51 is a catalytic residue.

This sequence belongs to the thioester dehydratase family. FabZ subfamily.

It localises to the cytoplasm. The catalysed reaction is a (3R)-hydroxyacyl-[ACP] = a (2E)-enoyl-[ACP] + H2O. Involved in unsaturated fatty acids biosynthesis. Catalyzes the dehydration of short chain beta-hydroxyacyl-ACPs and long chain saturated and unsaturated beta-hydroxyacyl-ACPs. The protein is 3-hydroxyacyl-[acyl-carrier-protein] dehydratase FabZ of Clostridium botulinum (strain Langeland / NCTC 10281 / Type F).